The chain runs to 331 residues: Protein C10 (331 aa).

This sequence belongs to the poxviridae C4/C10 protein family.

In Vaccinia virus (strain Copenhagen) (VACV), this protein is Protein C10.